Here is a 209-residue protein sequence, read N- to C-terminus: Probable L-serine dehydratase, alpha chain (209 aa).

The protein belongs to the iron-sulfur dependent L-serine dehydratase family. As to quaternary structure, heterodimer of an alpha chain and a beta chain. [4Fe-4S] cluster serves as cofactor.

It carries out the reaction L-serine = pyruvate + NH4(+). Its pathway is carbohydrate biosynthesis; gluconeogenesis. The sequence is that of Probable L-serine dehydratase, alpha chain (sdhA) from Latilactobacillus sakei (Lactobacillus sakei).